The following is a 372-amino-acid chain: MNEKKELKLILVAARNHLSRGDLKLLLSYLESDDCEFEISLQISEPTEQPELLELHRLVAIPALIKVSPAPKQIFAGSNIFVQLQTWLPRWKQEGVTKDLGINLQPSKIDSIRTQKEFLLEEELLVLRQENETLTKRIESQERLLRMVAHELRTPLTAATLAIQSQKLGQIDIKKLQDVIKRRLEEIELLSQDLLEVGTTKWEALFNPQKIDLGNISAEAILELEKFWRLRKIEIDTDIPSDLPSVYADQRRMRQVFLNLIENALKFSENSGRIKITLIHKTNQWVEITICDKGAGIPVSEQKRIFLDRVRLPQTSEGTSGFGIGLSVCRRIVEVHGGRIWVVSEVGEGSCFHFTVPVWQGQNKDQQHLTKG.

One can recognise a Histidine kinase domain in the interval Met147–Gln360. His150 carries the post-translational modification Phosphohistidine; by autocatalysis.

Homooligomerizes. Interacts with KaiC. Participates in the KaiBC complex, whose core is composed of a KaiC homohexamer and 6 KaiB.

The catalysed reaction is ATP + protein L-histidine = ADP + protein N-phospho-L-histidine.. Its function is as follows. Member of the two-component regulatory system SasA/RpaA involved in genome-wide circadian gene expression. One of several clock output pathways. Participates in the Kai clock protein complex, the main circadian regulator in cyanobacteria, via its interaction with KaiC. KaiC enhances the autophosphorylation activity of SasA, which then transfers its phosphate group to RpaA to activate it. In addition to its output function, recruits fold-shifted KaiB (KaiB(fs)) to KaiC to cooperatively form the KaiB(6):KaiC(6) complex (independent of SasA kinase activity). Required for robustness of the circadian rhythm of gene expression and is involved in clock output, also required for adaptation to light/dark cycles. In Prochlorococcus marinus subsp. pastoris (strain CCMP1986 / NIES-2087 / MED4), this protein is Adaptive-response sensory-kinase SasA.